A 469-amino-acid polypeptide reads, in one-letter code: Aspartyl/glutamyl-tRNA(Asn/Gln) amidotransferase subunit B (469 aa).

This sequence belongs to the GatB/GatE family. GatB subfamily. Heterotrimer of A, B and C subunits.

The catalysed reaction is L-glutamyl-tRNA(Gln) + L-glutamine + ATP + H2O = L-glutaminyl-tRNA(Gln) + L-glutamate + ADP + phosphate + H(+). The enzyme catalyses L-aspartyl-tRNA(Asn) + L-glutamine + ATP + H2O = L-asparaginyl-tRNA(Asn) + L-glutamate + ADP + phosphate + 2 H(+). Allows the formation of correctly charged Asn-tRNA(Asn) or Gln-tRNA(Gln) through the transamidation of misacylated Asp-tRNA(Asn) or Glu-tRNA(Gln) in organisms which lack either or both of asparaginyl-tRNA or glutaminyl-tRNA synthetases. The reaction takes place in the presence of glutamine and ATP through an activated phospho-Asp-tRNA(Asn) or phospho-Glu-tRNA(Gln). The chain is Aspartyl/glutamyl-tRNA(Asn/Gln) amidotransferase subunit B from Methanococcus maripaludis (strain C5 / ATCC BAA-1333).